The chain runs to 107 residues: Integration host factor subunit beta (107 aa).

The disordered stretch occupies residues Phe-76–Arg-107. Over residues Pro-82–Asp-101 the composition is skewed to basic and acidic residues.

This sequence belongs to the bacterial histone-like protein family. As to quaternary structure, heterodimer of an alpha and a beta chain.

Functionally, this protein is one of the two subunits of integration host factor, a specific DNA-binding protein that functions in genetic recombination as well as in transcriptional and translational control. This is Integration host factor subunit beta from Burkholderia cenocepacia (strain HI2424).